A 177-amino-acid polypeptide reads, in one-letter code: Large ribosomal subunit protein uL6 (177 aa).

This sequence belongs to the universal ribosomal protein uL6 family. As to quaternary structure, part of the 50S ribosomal subunit.

In terms of biological role, this protein binds to the 23S rRNA, and is important in its secondary structure. It is located near the subunit interface in the base of the L7/L12 stalk, and near the tRNA binding site of the peptidyltransferase center. This Rhodopseudomonas palustris (strain BisB18) protein is Large ribosomal subunit protein uL6.